The following is a 140-amino-acid chain: UPF0299 membrane protein CGSHiGG_01475 (140 aa).

4 helical membrane passes run 1-21 (MIQKLFLLVRSLVILSIMLYL), 33-52 (VPGSIWGLLLLFLGLTTRVI), 60-80 (GASLLIRFMAVLFVPVSVGII), and 92-112 (ILLVPNIVSTCVTLLVIGFLG).

The protein belongs to the UPF0299 family.

Its subcellular location is the cell inner membrane. The polypeptide is UPF0299 membrane protein CGSHiGG_01475 (Haemophilus influenzae (strain PittGG)).